The chain runs to 89 residues: Small ribosomal subunit protein bS20 (89 aa).

Disordered stretches follow at residues 1–25 and 69–89; these read MANIKSAIKRAKTSEKRRAHNASMK and KNAASRQKSRLAKKLNSIQAS. Basic residues predominate over residues 7–20; sequence AIKRAKTSEKRRAH.

The protein belongs to the bacterial ribosomal protein bS20 family.

Binds directly to 16S ribosomal RNA. The sequence is that of Small ribosomal subunit protein bS20 from Geobacillus thermodenitrificans (strain NG80-2).